Consider the following 512-residue polypeptide: Probable malate:quinone oxidoreductase (512 aa).

Belongs to the MQO family. FAD serves as cofactor.

It catalyses the reaction (S)-malate + a quinone = a quinol + oxaloacetate. The protein operates within carbohydrate metabolism; tricarboxylic acid cycle; oxaloacetate from (S)-malate (quinone route): step 1/1. The protein is Probable malate:quinone oxidoreductase of Bradyrhizobium diazoefficiens (strain JCM 10833 / BCRC 13528 / IAM 13628 / NBRC 14792 / USDA 110).